The following is a 658-amino-acid chain: uncharacterized protein (658 aa).

Residues Ser-516–Gly-639 show a composition bias toward low complexity. The disordered stretch occupies residues Ser-516–Gly-646.

The protein resides in the cytoplasm. This is an uncharacterized protein from Schizosaccharomyces pombe (strain 972 / ATCC 24843) (Fission yeast).